Consider the following 451-residue polypeptide: 3-phosphoshikimate 1-carboxyvinyltransferase (451 aa).

3-phosphoshikimate contacts are provided by Lys-30, Ser-31, and Arg-35. Lys-30 provides a ligand contact to phosphoenolpyruvate. Phosphoenolpyruvate-binding residues include Gly-101 and Arg-130. Ser-176, Ser-177, Gln-178, Asp-321, and Lys-348 together coordinate 3-phosphoshikimate. Gln-178 contributes to the phosphoenolpyruvate binding site. Asp-321 acts as the Proton acceptor in catalysis. Phosphoenolpyruvate contacts are provided by Arg-352 and Gln-422.

It belongs to the EPSP synthase family. As to quaternary structure, monomer.

The protein localises to the cytoplasm. The enzyme catalyses 3-phosphoshikimate + phosphoenolpyruvate = 5-O-(1-carboxyvinyl)-3-phosphoshikimate + phosphate. It participates in metabolic intermediate biosynthesis; chorismate biosynthesis; chorismate from D-erythrose 4-phosphate and phosphoenolpyruvate: step 6/7. In terms of biological role, catalyzes the transfer of the enolpyruvyl moiety of phosphoenolpyruvate (PEP) to the 5-hydroxyl of shikimate-3-phosphate (S3P) to produce enolpyruvyl shikimate-3-phosphate and inorganic phosphate. In Burkholderia pseudomallei (strain K96243), this protein is 3-phosphoshikimate 1-carboxyvinyltransferase.